We begin with the raw amino-acid sequence, 912 residues long: Transferrin-binding protein A (912 aa).

A signal peptide spans 1-23; sequence MTKKPYFRLSIISCLLISCYVKA. The TonB box signature appears at 50-57; the sequence is ETISVTAE. Residues 63-188 enclose the TBDR plug domain; it reads KDNEVTGLGK…LAGSVTFQSK (126 aa). Residues 199 to 912 form the TBDR beta-barrel domain; sequence SWGIQTKNAY…NYTLTLEMKF (714 aa). Positions 895 to 912 match the TonB C-terminal box motif; the sequence is TRYAASGRNYTLTLEMKF.

It belongs to the TonB-dependent receptor family.

It localises to the cell outer membrane. Haemophilus acquires iron by extracting it from serum transferrin (TF) in its human host. Acts as a transferrin receptor and is required for transferrin utilization. This Haemophilus influenzae (strain ATCC 51907 / DSM 11121 / KW20 / Rd) protein is Transferrin-binding protein A.